Reading from the N-terminus, the 370-residue chain is Chorismate synthase (370 aa).

The segment at 41–60 (IQGDLDRRKPGTSRHVTQRK) is disordered. Residues arginine 48 and arginine 54 each coordinate NADP(+). FMN contacts are provided by residues 125-127 (RSS), 238-239 (NA), glycine 278, 293-297 (KPTSS), and arginine 319.

Belongs to the chorismate synthase family. Homotetramer. FMNH2 serves as cofactor.

The catalysed reaction is 5-O-(1-carboxyvinyl)-3-phosphoshikimate = chorismate + phosphate. Its pathway is metabolic intermediate biosynthesis; chorismate biosynthesis; chorismate from D-erythrose 4-phosphate and phosphoenolpyruvate: step 7/7. Its function is as follows. Catalyzes the anti-1,4-elimination of the C-3 phosphate and the C-6 proR hydrogen from 5-enolpyruvylshikimate-3-phosphate (EPSP) to yield chorismate, which is the branch point compound that serves as the starting substrate for the three terminal pathways of aromatic amino acid biosynthesis. This reaction introduces a second double bond into the aromatic ring system. This chain is Chorismate synthase, found in Cupriavidus pinatubonensis (strain JMP 134 / LMG 1197) (Cupriavidus necator (strain JMP 134)).